Consider the following 214-residue polypeptide: Adenylate kinase (214 aa).

Residue 10-15 coordinates ATP; it reads GSGKGT. The NMP stretch occupies residues 30–59; the sequence is STGDMLRAAVREGTPLGMEAKKIMDAGQLV. AMP-binding positions include Thr-31, Arg-36, 57 to 59, 85 to 88, and Gln-92; these read QLV and GFPR. The LID stretch occupies residues 122-159; the sequence is GRRVHPASGRTYHVVFNPPKVEGRDDETGEPLVQREDD. Residues Arg-123 and 132 to 133 contribute to the ATP site; that span reads TY. Arg-156 and Arg-167 together coordinate AMP. Gly-200 is an ATP binding site.

It belongs to the adenylate kinase family. As to quaternary structure, monomer.

The protein localises to the cytoplasm. The enzyme catalyses AMP + ATP = 2 ADP. Its pathway is purine metabolism; AMP biosynthesis via salvage pathway; AMP from ADP: step 1/1. Its function is as follows. Catalyzes the reversible transfer of the terminal phosphate group between ATP and AMP. Plays an important role in cellular energy homeostasis and in adenine nucleotide metabolism. The sequence is that of Adenylate kinase from Methylococcus capsulatus (strain ATCC 33009 / NCIMB 11132 / Bath).